The primary structure comprises 603 residues: Sabinene hydrate synthase, chloroplastic (603 aa).

Residues 1 to 47 constitute a chloroplast transit peptide; sequence MSTISINHVGLLRNPLHGKSKRASINKSWSLCLPRSSSASRLVKPCR. Mn(2+)-binding residues include Asp357 and Asp361. Positions 357-361 match the DDXXD motif motif; the sequence is DDVYD. Homodimerization regions lie at residues 363-369 and 435-472; these read YGTLDEL and EAEW…VSIP. Mn(2+) contacts are provided by Asp501 and Glu509.

Belongs to the terpene synthase family. As to quaternary structure, homodimer. Requires Mn(2+) as cofactor. Mg(2+) is required as a cofactor.

It is found in the plastid. The protein resides in the chloroplast. It carries out the reaction (2E)-geranyl diphosphate + H2O = sabinene hydrate + diphosphate. Its pathway is secondary metabolite biosynthesis; terpenoid biosynthesis. Functionally, involved in the biosynthesis of phenolic monoterpenes natural products. Monoterpene synthase which catalyzes the conversion of geranyl diphosphate (GPP) to sabinene hydrate, mainly (Z)-sabinene hydrate and to a lower extent (E)-sabinene hydrate, and the formation of minor amounts and traces of several other monoterpenes (e.g. mainly alpha-thujene, alpha-pinene and myrcene). The sequence is that of Sabinene hydrate synthase, chloroplastic from Thymus vulgaris (Thyme).